The chain runs to 331 residues: 2-hydroxyacid dehydrogenase homolog (331 aa).

Residues 154 to 155, 234 to 236, and Asp-260 each bind NAD(+); these read HI and TSR. Residue Arg-236 is part of the active site. Residue Glu-265 is part of the active site. Catalysis depends on His-297, which acts as the Proton donor. 297–300 contributes to the NAD(+) binding site; the sequence is HQAF.

It belongs to the D-isomer specific 2-hydroxyacid dehydrogenase family.

The protein is 2-hydroxyacid dehydrogenase homolog (ddh) of Zymomonas mobilis subsp. mobilis (strain ATCC 31821 / ZM4 / CP4).